The primary structure comprises 263 residues: Indole-3-glycerol phosphate synthase (263 aa).

It belongs to the TrpC family.

It catalyses the reaction 1-(2-carboxyphenylamino)-1-deoxy-D-ribulose 5-phosphate + H(+) = (1S,2R)-1-C-(indol-3-yl)glycerol 3-phosphate + CO2 + H2O. The protein operates within amino-acid biosynthesis; L-tryptophan biosynthesis; L-tryptophan from chorismate: step 4/5. This Rhodospirillum rubrum (strain ATCC 11170 / ATH 1.1.1 / DSM 467 / LMG 4362 / NCIMB 8255 / S1) protein is Indole-3-glycerol phosphate synthase.